Here is a 253-residue protein sequence, read N- to C-terminus: Molybdate import ATP-binding protein MolC (253 aa).

Residues 5–229 (LSVENLGFYY…NLTALFHLPM (225 aa)) form the ABC transporter domain. 38 to 45 (GQNGCGKS) is a binding site for ATP.

Belongs to the ABC transporter superfamily. In terms of assembly, the complex is composed of two ATP-binding proteins (MolC), two transmembrane proteins (MolB) and a solute-binding protein (MolA).

It localises to the cell inner membrane. The enzyme catalyses molybdate(out) + ATP + H2O = molybdate(in) + ADP + phosphate + H(+). Its activity is regulated as follows. The MolBCA complex shows a decrease in affinity in the presence of increasing concentrations of substrate and nucleotide. Its function is as follows. Part of the ABC transporter complex MolBCA involved in molybdate import. Responsible for energy coupling to the transport system. Functions as a low-affinity molybdate transporter. This Haemophilus influenzae (strain ATCC 51907 / DSM 11121 / KW20 / Rd) protein is Molybdate import ATP-binding protein MolC.